We begin with the raw amino-acid sequence, 217 residues long: 3-oxoadipate CoA-transferase subunit B (217 aa).

Glu50 is an active-site residue.

Belongs to the 3-oxoacid CoA-transferase subunit B family. Heterodimer.

It carries out the reaction 3-oxoadipate + succinyl-CoA = 3-oxoadipyl-CoA + succinate. The protein operates within aromatic compound metabolism; beta-ketoadipate pathway; acetyl-CoA and succinyl-CoA from 3-oxoadipate: step 1/2. The protein is 3-oxoadipate CoA-transferase subunit B (pcaJ) of Acinetobacter baylyi (strain ATCC 33305 / BD413 / ADP1).